The following is a 252-amino-acid chain: Transcription factor bHLH117 (252 aa).

The tract at residues 103–141 (LFPSLSPPLPAAKRQKLNSTSSSTTSGSPTASNDGGIIT) is disordered. Residues 121-134 (STSSSTTSGSPTAS) are compositionally biased toward low complexity. The bHLH domain maps to 130 to 179 (SPTASNDGGIITKRRKISDKIRSLEKLMPWERKMNLAMTLEESHKYIKFL).

Homodimer.

It is found in the nucleus. This chain is Transcription factor bHLH117 (BHLH117), found in Arabidopsis thaliana (Mouse-ear cress).